The chain runs to 420 residues: Tryptophan synthase beta chain (420 aa).

Lys-112 is subject to N6-(pyridoxal phosphate)lysine.

The protein belongs to the TrpB family. Tetramer of two alpha and two beta chains. The cofactor is pyridoxal 5'-phosphate.

The catalysed reaction is (1S,2R)-1-C-(indol-3-yl)glycerol 3-phosphate + L-serine = D-glyceraldehyde 3-phosphate + L-tryptophan + H2O. It functions in the pathway amino-acid biosynthesis; L-tryptophan biosynthesis; L-tryptophan from chorismate: step 5/5. In terms of biological role, the beta subunit is responsible for the synthesis of L-tryptophan from indole and L-serine. This Thermosipho africanus (strain TCF52B) protein is Tryptophan synthase beta chain.